The primary structure comprises 204 residues: Dual-action ribosomal maturation protein DarP (204 aa).

2 disordered regions span residues 1 to 31 and 182 to 204; these read MPPM…SKSQ and GGAS…DDEA. The span at 186–204 shows a compositional bias: acidic residues; it reads DSDDEAADDAGDDHDDDEA.

Belongs to the DarP family.

The protein resides in the cytoplasm. Its function is as follows. Member of a network of 50S ribosomal subunit biogenesis factors which assembles along the 30S-50S interface, preventing incorrect 23S rRNA structures from forming. Promotes peptidyl transferase center (PTC) maturation. The protein is Dual-action ribosomal maturation protein DarP of Burkholderia orbicola (strain MC0-3).